The following is a 446-amino-acid chain: Glutamyl-tRNA reductase (446 aa).

Substrate is bound by residues 49 to 52, Ser-107, 112 to 114, and Gln-118; these read TCNR and EPQ. The active-site Nucleophile is Cys-50. 187–192 is an NADP(+) binding site; the sequence is GAGETI. The disordered stretch occupies residues 417 to 446; that stretch reads NANEDTRESVDKEQTGTTQGAARGDQRSTG. Positions 420-430 are enriched in basic and acidic residues; sequence EDTRESVDKEQ.

The protein belongs to the glutamyl-tRNA reductase family. Homodimer.

It carries out the reaction (S)-4-amino-5-oxopentanoate + tRNA(Glu) + NADP(+) = L-glutamyl-tRNA(Glu) + NADPH + H(+). It participates in porphyrin-containing compound metabolism; protoporphyrin-IX biosynthesis; 5-aminolevulinate from L-glutamyl-tRNA(Glu): step 1/2. Its function is as follows. Catalyzes the NADPH-dependent reduction of glutamyl-tRNA(Glu) to glutamate 1-semialdehyde (GSA). The protein is Glutamyl-tRNA reductase of Alkalilimnicola ehrlichii (strain ATCC BAA-1101 / DSM 17681 / MLHE-1).